Consider the following 63-residue polypeptide: ATP synthase F(0) complex subunit 8 (63 aa).

A helical transmembrane segment spans residues 8-24 (MWLLTILSMLLTLFVLF). Residue K57 is modified to N6-acetyllysine.

The protein belongs to the ATPase protein 8 family. Component of the ATP synthase complex composed at least of ATP5F1A/subunit alpha, ATP5F1B/subunit beta, ATP5MC1/subunit c (homooctomer), MT-ATP6/subunit a, MT-ATP8/subunit 8, ATP5ME/subunit e, ATP5MF/subunit f, ATP5MG/subunit g, ATP5MK/subunit k, ATP5MJ/subunit j, ATP5F1C/subunit gamma, ATP5F1D/subunit delta, ATP5F1E/subunit epsilon, ATP5PF/subunit F6, ATP5PB/subunit b, ATP5PD/subunit d, ATP5PO/subunit OSCP. ATP synthase complex consists of a soluble F(1) head domain (subunits alpha(3) and beta(3)) - the catalytic core - and a membrane F(0) domain - the membrane proton channel (subunits c, a, 8, e, f, g, k and j). These two domains are linked by a central stalk (subunits gamma, delta, and epsilon) rotating inside the F1 region and a stationary peripheral stalk (subunits F6, b, d, and OSCP). Interacts with PRICKLE3.

The protein localises to the mitochondrion membrane. Subunit 8, of the mitochondrial membrane ATP synthase complex (F(1)F(0) ATP synthase or Complex V) that produces ATP from ADP in the presence of a proton gradient across the membrane which is generated by electron transport complexes of the respiratory chain. ATP synthase complex consist of a soluble F(1) head domain - the catalytic core - and a membrane F(1) domain - the membrane proton channel. These two domains are linked by a central stalk rotating inside the F(1) region and a stationary peripheral stalk. During catalysis, ATP synthesis in the catalytic domain of F(1) is coupled via a rotary mechanism of the central stalk subunits to proton translocation. In vivo, can only synthesize ATP although its ATP hydrolase activity can be activated artificially in vitro. Part of the complex F(0) domain. This Balaenoptera physalus (Fin whale) protein is ATP synthase F(0) complex subunit 8.